The following is a 360-amino-acid chain: Homoserine O-succinyltransferase (360 aa).

Cys-146 (acyl-thioester intermediate) is an active-site residue. 2 residues coordinate substrate: Lys-167 and Ser-196. Residue His-239 is the Proton acceptor of the active site. Glu-241 is an active-site residue. Residue Arg-253 participates in substrate binding.

The protein belongs to the MetA family.

The protein localises to the cytoplasm. The catalysed reaction is L-homoserine + succinyl-CoA = O-succinyl-L-homoserine + CoA. Its pathway is amino-acid biosynthesis; L-methionine biosynthesis via de novo pathway; O-succinyl-L-homoserine from L-homoserine: step 1/1. Its function is as follows. Transfers a succinyl group from succinyl-CoA to L-homoserine, forming succinyl-L-homoserine. In vitro, can also use glutaryl-CoA as acyl donor. In Thiothrix nivea (strain ATCC 35100 / DSM 5205 / JP2), this protein is Homoserine O-succinyltransferase.